The primary structure comprises 535 residues: NEDD8-activating enzyme E1 regulatory subunit (535 aa).

Residues 332–345 (DMIADSSKFIKLQN) are interaction with UBA3.

It belongs to the ubiquitin-activating E1 family. ULA1 subfamily. Heterodimer of UBA3 and NAE1. The complex binds NEDD8 and UBE2M.

Its pathway is protein modification; protein neddylation. Regulatory subunit of the dimeric UBA3-NAE1 E1 enzyme. E1 activates NEDD8 by first adenylating its C-terminal glycine residue with ATP, thereafter linking this residue to the side chain of the catalytic cysteine, yielding a NEDD8-UBA3 thioester and free AMP. E1 finally transfers NEDD8 to the catalytic cysteine of UBE2M. The covalent attachment of NEDD8 to target proteins is known as 'neddylation' and the process is involved in the regulation of cell growth, viability and development. This Gallus gallus (Chicken) protein is NEDD8-activating enzyme E1 regulatory subunit (NAE1).